Reading from the N-terminus, the 168-residue chain is Small ribosomal subunit protein uS5 (168 aa).

One can recognise an S5 DRBM domain in the interval 12 to 75 (YQEKLVSVTR…DQAKKNMVYI (64 aa)).

Belongs to the universal ribosomal protein uS5 family. In terms of assembly, part of the 30S ribosomal subunit. Contacts proteins S4 and S8.

In terms of biological role, with S4 and S12 plays an important role in translational accuracy. Functionally, located at the back of the 30S subunit body where it stabilizes the conformation of the head with respect to the body. This chain is Small ribosomal subunit protein uS5, found in Legionella pneumophila (strain Paris).